Consider the following 600-residue polypeptide: Integrator complex subunit 11 (600 aa).

Positions 68, 70, 72, 73, 157, and 178 each coordinate Zn(2+). An HXHXDH motif motif is present at residues 68-73; it reads HFHLDH. Glu-203 is an active-site residue. His-414 contacts Zn(2+). Positions 469-479 match the Nuclear localization signal motif; it reads LLPDAKKPKLM.

The protein belongs to the metallo-beta-lactamase superfamily. RNA-metabolizing metallo-beta-lactamase-like family. INTS11 subfamily. In terms of assembly, component of the Integrator complex, composed of core subunits INTS1, INTS2, INTS3, INTS4, INTS5, INTS6, INTS7, INTS8, INTS9/RC74, INTS10, INTS11/CPSF3L, INTS12, INTS13, INTS14 and INTS15. The core complex associates with protein phosphatase 2A subunits PPP2CA and PPP2R1A, to form the Integrator-PP2A (INTAC) complex. INTS11 is part of the RNA endonuclease subcomplex, composed of INTS4, INTS9, INTS11 and inositol hexakisphosphate (InsP6). Requires Zn(2+) as cofactor.

Its subcellular location is the nucleus. The protein resides in the cytoplasm. RNA endonuclease component of the integrator complex, a multiprotein complex that terminates RNA polymerase II (Pol II) transcription in the promoter-proximal region of genes. The integrator complex provides a quality checkpoint during transcription elongation by driving premature transcription termination of transcripts that are unfavorably configured for transcriptional elongation: the complex terminates transcription by (1) catalyzing dephosphorylation of the C-terminal domain (CTD) of Pol II subunit POLR2A/RPB1 and SUPT5H/SPT5, (2) degrading the exiting nascent RNA transcript via endonuclease activity and (3) promoting the release of Pol II from bound DNA. The integrator complex is also involved in terminating the synthesis of non-coding Pol II transcripts, such as enhancer RNAs (eRNAs), small nuclear RNAs (snRNAs), telomerase RNAs and long non-coding RNAs (lncRNAs). Within the integrator complex, INTS11 constitutes the RNA endonuclease subunit that degrades exiting nascent RNA transcripts. This chain is Integrator complex subunit 11 (INTS11), found in Gallus gallus (Chicken).